A 558-amino-acid polypeptide reads, in one-letter code: Dihydroxy-acid dehydratase (558 aa).

Residue cysteine 48 coordinates [2Fe-2S] cluster. Residue aspartate 80 participates in Mg(2+) binding. Cysteine 121 is a [2Fe-2S] cluster binding site. 2 residues coordinate Mg(2+): aspartate 122 and lysine 123. Lysine 123 carries the N6-carboxylysine modification. A [2Fe-2S] cluster-binding site is contributed by cysteine 193. Glutamate 445 contributes to the Mg(2+) binding site. The active-site Proton acceptor is serine 471.

The protein belongs to the IlvD/Edd family. As to quaternary structure, homodimer. [2Fe-2S] cluster serves as cofactor. Requires Mg(2+) as cofactor.

It catalyses the reaction (2R)-2,3-dihydroxy-3-methylbutanoate = 3-methyl-2-oxobutanoate + H2O. It carries out the reaction (2R,3R)-2,3-dihydroxy-3-methylpentanoate = (S)-3-methyl-2-oxopentanoate + H2O. Its pathway is amino-acid biosynthesis; L-isoleucine biosynthesis; L-isoleucine from 2-oxobutanoate: step 3/4. It functions in the pathway amino-acid biosynthesis; L-valine biosynthesis; L-valine from pyruvate: step 3/4. In terms of biological role, functions in the biosynthesis of branched-chain amino acids. Catalyzes the dehydration of (2R,3R)-2,3-dihydroxy-3-methylpentanoate (2,3-dihydroxy-3-methylvalerate) into 2-oxo-3-methylpentanoate (2-oxo-3-methylvalerate) and of (2R)-2,3-dihydroxy-3-methylbutanoate (2,3-dihydroxyisovalerate) into 2-oxo-3-methylbutanoate (2-oxoisovalerate), the penultimate precursor to L-isoleucine and L-valine, respectively. The protein is Dihydroxy-acid dehydratase of Prochlorococcus marinus (strain SARG / CCMP1375 / SS120).